The primary structure comprises 188 residues: Translation machinery-associated protein 22 (188 aa).

In terms of domain architecture, SUI1 spans 96 to 167; it reads VTIKRIERNK…EIEEFLLEKY (72 aa).

It belongs to the DENR family. In terms of assembly, interacts with the 40S ribosomal subunit.

The protein resides in the cytoplasm. This Chaetomium globosum (strain ATCC 6205 / CBS 148.51 / DSM 1962 / NBRC 6347 / NRRL 1970) (Soil fungus) protein is Translation machinery-associated protein 22 (TMA22).